A 663-amino-acid polypeptide reads, in one-letter code: (R)-specific secondary-alkylsulfatase (663 aa).

The first 28 residues, 1 to 28, serve as a signal peptide directing secretion; sequence MSRFIRASQRRTLLATLIAATLAQPLLA. The Zn(2+) site is built by histidine 179, histidine 181, aspartate 183, and histidine 184. Residue glutamine 232 participates in sulfate binding. Zn(2+) is bound by residues glutamate 291 and aspartate 310. Sulfate-binding positions include 318-323 and arginine 328; that span reads NLLTPR. Histidine 355 provides a ligand contact to Zn(2+). Tyrosine 417 lines the sulfate pocket.

The protein belongs to the metallo-beta-lactamase superfamily. Type III sulfatase family. In terms of assembly, homodimer.

The catalysed reaction is an (R)-secondary-alkyl sulfate + H2O = an (S)-secondary-alcohol + sulfate.. Functionally, alkylsulfatase that catalyzes the enantioselective hydrolysis of secondary-alkylsulfates with strict inversion of configuration, leading to the formation of homochiral (S)-configurated alcohols and nonreacted sulfate esters. The substrate spectrum includes a range of linear, branched or cyclic sec-alkylsulfates. Can use sec-alkylsulfate esters bearing aromatic, olefinic and acetylenic moieties. Acts by cleaving the C-O bond, resulting in inversion at the carbon. This is (R)-specific secondary-alkylsulfatase from Pseudomonas sp.